We begin with the raw amino-acid sequence, 307 residues long: Type 2A encapsulin shell protein (307 aa).

The protein belongs to the encapsulin family. Family 2A subfamily. In terms of assembly, homooligomeric. The encapsulin nanocompartment is formed by 60 subunits; monomers form pentamers which assemble to form shells. There are 12 charged pores where the pentamers meet as well as 3-fold axis channels and dimer channels.

The protein localises to the encapsulin nanocompartment. Shell component of a type 2A encapsulin nanocompartment. Forms encapsulin nanocompartments about 24 nm in diameter from 60 monomers. Probably encapsulates at least cysteine desulfurase (CyD) and allows passage of cysteine into its interior, probably involved in sulfur metabolism. The protein is Type 2A encapsulin shell protein of Mycobacterium avium.